Consider the following 3644-residue polypeptide: Msx2-interacting protein (3644 aa).

Residues 1–574 mediate DNA binding; sequence MVRETRHLWV…DAQAAVKETK (574 aa). An RRM 1 domain is found at 6–81; the sequence is RHLWVGNLPE…RDLRTDYNEP (76 aa). At S99 the chain carries Phosphoserine. 3 disordered regions span residues 103–124, 170–209, and 225–331; these read EVSG…SLHA, YRDP…REQF, and TREV…EKDE. R108 carries the omega-N-methylarginine modification. Phosphoserine is present on residues S188 and S190. 2 stretches are compositionally biased toward basic and acidic residues: residues 192–207 and 225–237; these read NRFD…RARE and TREV…ERSY. Residues 245–310 show a composition bias toward low complexity; it reads PHSSQSRNQS…TASDDSPARS (66 aa). Residue S310 is modified to Phosphoserine. RRM domains lie at 336-416, 439-514, and 518-590; these read FGIK…VGPE, RTLF…FGKS, and NCVW…FANR. The stretch at 559-575 forms a coiled coil; it reads LYSEIEDAQAAVKETKG. 2 disordered regions span residues 625–673 and 716–1413; these read SKHE…SRRD and IREY…ASSF. 2 stretches are compositionally biased toward basic and acidic residues: residues 639–656 and 716–745; these read KCRE…ERTY and IREY…RPIE. Position 647 is a phosphoserine (S647). S747, S749, S758, and S762 each carry phosphoserine. Residues 765–783 show a composition bias toward basic and acidic residues; sequence HSERLPSDSERRLYRRSSE. Over residues 784 to 794 the composition is skewed to low complexity; it reads RSGSCSSVSPP. Phosphoserine is present on S792. Over residues 795 to 842 the composition is skewed to basic and acidic residues; the sequence is RYDKLEKARLERYTKNEKADKERTFDPERVERERRIVRKEKGEKDKAE. The stretch at 822 to 850 forms a coiled coil; it reads ERVERERRIVRKEKGEKDKAERQKRKGKA. Residues S852, S855, and S869 each carry the phosphoserine modification. 4 stretches are compositionally biased toward basic and acidic residues: residues 863 to 894, 904 to 930, 947 to 975, and 1009 to 1071; these read ENDR…KNRL, RVKE…RDTT, AKSD…EGRT, and LKIE…KLER. Phosphoserine occurs at positions 1077 and 1183. The segment covering 1138 to 1227 has biased composition (basic and acidic residues); the sequence is GPEKEEVRKN…ERRSLVHEVG (90 aa). The stretch at 1185–1206 forms a coiled coil; it reads RKQMEQSRRKQRMEMEIAKAEK. Phosphoserine occurs at positions 1209, 1237, 1267, 1276, 1283, 1293, 1298, 1302, and 1348. The segment covering 1246–1272 has biased composition (basic and acidic residues); it reads DHVDFDICTKRERNYRSSRQISEDSER. The span at 1283–1292 shows a compositional bias: basic and acidic residues; sequence SFHDDDDPRG. Positions 1351–1365 are enriched in basic and acidic residues; sequence EPSRWDPPMKQDPSR. A phosphoserine mark is found at S1395 and S1397. A phosphothreonine mark is found at T1454 and T1456. Disordered regions lie at residues 1494 to 1538 and 1557 to 2447; these read DKEK…QERQ and RLQH…ARFK. Residues 1509–1544 adopt a coiled-coil conformation; sequence YMKKKKIRTDSEGKLDDKKDERREEEQERQELFASR. 2 stretches are compositionally biased toward basic and acidic residues: residues 1516-1538 and 1557-1567; these read RTDS…QERQ and RLQHLERKSEE. Residues 1582–1591 show a composition bias toward polar residues; it reads EGANSTSDSV. Residues 1601 to 1646 are compositionally biased toward basic and acidic residues; it reads RFMELTRMQQKEKEKDQKPKEAEKQEEPETHPKTPEPAAETKEPEP. Residues 1607–1627 are a coiled coil; that stretch reads RMQQKEKEKDQKPKEAEKQEE. Phosphothreonine is present on T1634. Positions 1701 to 1710 are enriched in low complexity; the sequence is VSEPVSVPVE. Residues 1756–1765 show a composition bias toward polar residues; it reads PGTTVSQVES. A compositionally biased stretch (basic and acidic residues) spans 1782-1796; it reads QRSEEAEEGKVEKPD. The span at 1797 to 1810 shows a compositional bias: polar residues; the sequence is TTPSTEPDATQNAG. T1844 carries the phosphothreonine modification. Composition is skewed to basic and acidic residues over residues 1857–1871 and 1879–1894; these read PVTR…EKLK and EAQK…EKIT. Phosphoserine occurs at positions 1915 and 1936. Over residues 1930–1943 the composition is skewed to basic and acidic residues; that stretch reads TDHESRSPAKEPVE. Phosphothreonine is present on T1965. Residues 1967-1976 show a composition bias toward basic residues; sequence RRGRPPKTRR. Composition is skewed to basic and acidic residues over residues 1977–1991, 2039–2066, 2074–2084, and 2097–2106; these read RAEE…EPAE, GNPK…DKSG, VLERKPPEKTY, and GMDRAAHQRS. Phosphoserine occurs at positions 2128 and 2134. Polar residues predominate over residues 2129–2147; sequence PQESESPQKGSGSSPQLAN. The interval 2138–2462 is interaction with MSX2; that stretch reads GSGSSPQLAN…ESDPVTPPSD (325 aa). T2171 carries the post-translational modification Phosphothreonine. Low complexity-rich tracts occupy residues 2191-2212 and 2231-2242; these read EPSA…ASEE and AAAIGSIISDAS. The region spanning 2216 to 2704 is the RID domain; it reads EHGHKPAHQA…NVLTGPVNVL (489 aa). Residues 2261–2274 are compositionally biased toward basic and acidic residues; that stretch reads HPREGMEPGLHEAE. A compositionally biased stretch (polar residues) spans 2281-2290; it reads GTATESSAPQ. Over residues 2318-2329 the composition is skewed to basic and acidic residues; that stretch reads KGSKAEVTPPRK. Residues 2330-2345 show a composition bias toward basic residues; the sequence is DKGRQKTTRRRKRNAN. Residues 2359–2379 are compositionally biased toward low complexity; sequence AEQTQSESPAAEEATAATPEA. Residue S2366 is modified to Phosphoserine. T2419 carries the post-translational modification Phosphothreonine. Residues S2450 and S2454 each carry the phosphoserine modification. Disordered regions lie at residues 2453-2472, 2481-2528, 2745-2781, and 2829-2849; these read ESDP…TIPL, PVIP…MDTS, AAKG…GAGL, and SQVK…PQTP. T2458 is subject to Phosphothreonine. S2491 is modified (phosphoserine). Residues 2706-2845 are interaction with RBPSUH; sequence TPVSATVGTV…ITPTQSAPKG (140 aa). T2913 and T2925 each carry phosphothreonine. The interval 2974–3023 is disordered; the sequence is NHVPSGPSTPADRTIAHLATPKPDTHSPRPTGPTPGLFPRPCHPSSTTST. The span at 3003-3015 shows a compositional bias: pro residues; that stretch reads PTGPTPGLFPRPC. 2 positions are modified to asymmetric dimethylarginine: R3088 and R3096. Residues 3310–3473 are disordered; sequence RTKTSAQVPP…QESSPHGTPQ (164 aa). Residues 3323 to 3340 show a composition bias toward low complexity; that stretch reads PLQSTQSAQPAPSTQATQ. Polar residues predominate over residues 3366–3379; it reads QVSQEAKGTQTGGV. The residue at position 3413 (S3413) is a Phosphoserine. An SPOC domain is found at 3478–3644; sequence MVQLLKKYPI…PHLMIVIASV (167 aa).

It belongs to the RRM Spen family. As to quaternary structure, interacts with NCOR2, HDAC1, HDAC2, RBBP4, MBD3 and MTA1L1. Interacts with the nuclear receptors RAR and PPARD. Interacts with RAR in absence of ligand. Binds to the steroid receptor RNA coactivator SRA. Interacts with MSX2. Interacts with RBPSUH; this interaction may prevent the interaction between RBPSUH and NOTCH1. Binds to HIPK3. Highly expressed in testis. Expressed at lower level in brain, lung, spleen, liver and kidney. Weakly expressed in cardiac and skeletal muscles and ovary. In spleen, it is expressed in follicular B-cells, while it is weakly expressed in marginal zone B-cells.

It is found in the nucleus. In terms of biological role, may serve as a nuclear matrix platform that organizes and integrates transcriptional responses. In osteoblasts, supports transcription activation: synergizes with RUNX2 to enhance FGFR2-mediated activation of the osteocalcin FGF-responsive element (OCFRE). Has also been shown to be an essential corepressor protein, which probably regulates different key pathways, such as the Notch pathway. Negative regulator of the Notch pathway via its interaction with RBPSUH, which prevents the association between NOTCH1 and RBPSUH, and therefore suppresses the transactivation activity of Notch signaling. Blocks the differentiation of precursor B-cells into marginal zone B-cells. Probably represses transcription via the recruitment of large complexes containing histone deacetylase proteins. May bind both to DNA and RNA. The sequence is that of Msx2-interacting protein (Spen) from Mus musculus (Mouse).